Consider the following 412-residue polypeptide: Tyrosine--tRNA ligase (412 aa).

Tyr38 provides a ligand contact to L-tyrosine. The short motif at 43–52 (CTANSLHIGS) is the 'HIGH' region element. Residues Tyr170 and Gln174 each contribute to the L-tyrosine site. The short motif at 230–234 (KMGKT) is the 'KMSKS' region element. Lys233 is a binding site for ATP. Residues 343-409 (IPISKLLHMW…CGKKRRLKVV (67 aa)) form the S4 RNA-binding domain.

Belongs to the class-I aminoacyl-tRNA synthetase family. TyrS type 1 subfamily. As to quaternary structure, homodimer.

The protein localises to the cytoplasm. It carries out the reaction tRNA(Tyr) + L-tyrosine + ATP = L-tyrosyl-tRNA(Tyr) + AMP + diphosphate + H(+). In terms of biological role, catalyzes the attachment of tyrosine to tRNA(Tyr) in a two-step reaction: tyrosine is first activated by ATP to form Tyr-AMP and then transferred to the acceptor end of tRNA(Tyr). In Anaplasma phagocytophilum (strain HZ), this protein is Tyrosine--tRNA ligase.